Reading from the N-terminus, the 485-residue chain is Aldehyde dehydrogenase family 3 member A2 (485 aa).

At 1–463 the chain is on the cytoplasmic side; it reads MEREVQRVRQ…FLLRRFNKEK (463 aa). 185-190 is a binding site for NAD(+); it reads GNTAVG. Residues Glu-207 and Cys-241 contribute to the active site. A Phosphoserine modification is found at Ser-293. Residues 464–484 traverse the membrane as a helical segment; sequence LGLLVLTFLGIVAAVLVNAGY. The Prevents secretion from ER signature appears at 481–484; the sequence is NAGY.

This sequence belongs to the aldehyde dehydrogenase family. Homodimer.

It localises to the microsome membrane. It is found in the endoplasmic reticulum membrane. The catalysed reaction is an aldehyde + NAD(+) + H2O = a carboxylate + NADH + 2 H(+). The enzyme catalyses a fatty aldehyde + NAD(+) + H2O = a fatty acid + NADH + 2 H(+). It carries out the reaction (2E)-hexadecenal + NAD(+) + H2O = (E)-hexadec-2-enoate + NADH + 2 H(+). It catalyses the reaction hexadecanoate + NADH + 2 H(+) = hexadecanal + NAD(+) + H2O. The catalysed reaction is 22-oxodocosanoate + NAD(+) + H2O = docosanedioate + NADH + 2 H(+). The enzyme catalyses 2,6,10,14-tetramethylpentadecanal + NAD(+) + H2O = 2,6,10,14-tetramethylpentadecanoate + NADH + 2 H(+). It carries out the reaction octadecanal + NAD(+) + H2O = octadecanoate + NADH + 2 H(+). It catalyses the reaction dodecanoate + NADH + 2 H(+) = dodecanal + NAD(+) + H2O. The catalysed reaction is decanal + NAD(+) + H2O = decanoate + NADH + 2 H(+). The enzyme catalyses tetradecanal + NAD(+) + H2O = tetradecanoate + NADH + 2 H(+). It carries out the reaction octanal + NAD(+) + H2O = octanoate + NADH + 2 H(+). It catalyses the reaction heptanal + NAD(+) + H2O = heptanoate + NADH + 2 H(+). The catalysed reaction is (2E,6E)-farnesal + NAD(+) + H2O = (2E,6E)-farnesoate + NADH + 2 H(+). In terms of biological role, catalyzes the oxidation of medium and long-chain aliphatic aldehydes to fatty acids. Active on a variety of saturated and unsaturated aliphatic aldehydes between 6 and 24 carbons in length. Responsible for conversion of the sphingosine 1-phosphate (S1P) degradation product hexadecenal to hexadecenoic acid. This is Aldehyde dehydrogenase family 3 member A2 (ALDH3A2) from Macaca fascicularis (Crab-eating macaque).